The following is a 440-amino-acid chain: Putative epoxide hydrolase (440 aa).

The segment at 1–21 is disordered; it reads MTKTLAEQPGEGAAPVSPSPS. The tat-type signal signal peptide spans 1-49; the sequence is MTKTLAEQPGEGAAPVSPSPSRRALLHGAAGLGALAAGAAVAGPGLAFA.

It belongs to the peptidase S33 family. Post-translationally, predicted to be exported by the Tat system. The position of the signal peptide cleavage has not been experimentally proven.

The enzyme catalyses an epoxide + H2O = an ethanediol. The sequence is that of Putative epoxide hydrolase from Stigmatella aurantiaca (strain DW4/3-1).